We begin with the raw amino-acid sequence, 475 residues long: tRNA-2-methylthio-N(6)-dimethylallyladenosine synthase (475 aa).

Positions 1-20 (MEQNLTTERSETSSSRAGTA) are disordered. The MTTase N-terminal domain occupies 25–145 (KKVFVKTYGC…LPSVVTRARA (121 aa)). [4Fe-4S] cluster-binding residues include Cys-34, Cys-70, Cys-108, Cys-186, Cys-190, and Cys-193. Positions 172 to 404 (RSRGVTAFLT…QALLAEQQRA (233 aa)) constitute a Radical SAM core domain. Residues 407-469 (ESLVGTEIDL…GHSLFCEPAG (63 aa)) form the TRAM domain.

The protein belongs to the methylthiotransferase family. MiaB subfamily. In terms of assembly, monomer. Requires [4Fe-4S] cluster as cofactor.

The protein resides in the cytoplasm. It carries out the reaction N(6)-dimethylallyladenosine(37) in tRNA + (sulfur carrier)-SH + AH2 + 2 S-adenosyl-L-methionine = 2-methylsulfanyl-N(6)-dimethylallyladenosine(37) in tRNA + (sulfur carrier)-H + 5'-deoxyadenosine + L-methionine + A + S-adenosyl-L-homocysteine + 2 H(+). Catalyzes the methylthiolation of N6-(dimethylallyl)adenosine (i(6)A), leading to the formation of 2-methylthio-N6-(dimethylallyl)adenosine (ms(2)i(6)A) at position 37 in tRNAs that read codons beginning with uridine. In Chelativorans sp. (strain BNC1), this protein is tRNA-2-methylthio-N(6)-dimethylallyladenosine synthase.